Here is a 322-residue protein sequence, read N- to C-terminus: Lipoyl synthase (322 aa).

The [4Fe-4S] cluster site is built by Cys69, Cys74, Cys80, Cys95, Cys99, Cys102, and Ser309. The region spanning 81–298 is the Radical SAM core domain; sequence FNHGTATFMI…GVKAKALGFD (218 aa).

Belongs to the radical SAM superfamily. Lipoyl synthase family. The cofactor is [4Fe-4S] cluster.

The protein resides in the cytoplasm. It catalyses the reaction [[Fe-S] cluster scaffold protein carrying a second [4Fe-4S](2+) cluster] + N(6)-octanoyl-L-lysyl-[protein] + 2 oxidized [2Fe-2S]-[ferredoxin] + 2 S-adenosyl-L-methionine + 4 H(+) = [[Fe-S] cluster scaffold protein] + N(6)-[(R)-dihydrolipoyl]-L-lysyl-[protein] + 4 Fe(3+) + 2 hydrogen sulfide + 2 5'-deoxyadenosine + 2 L-methionine + 2 reduced [2Fe-2S]-[ferredoxin]. It functions in the pathway protein modification; protein lipoylation via endogenous pathway; protein N(6)-(lipoyl)lysine from octanoyl-[acyl-carrier-protein]: step 2/2. In terms of biological role, catalyzes the radical-mediated insertion of two sulfur atoms into the C-6 and C-8 positions of the octanoyl moiety bound to the lipoyl domains of lipoate-dependent enzymes, thereby converting the octanoylated domains into lipoylated derivatives. The protein is Lipoyl synthase of Psychromonas ingrahamii (strain DSM 17664 / CCUG 51855 / 37).